Reading from the N-terminus, the 339-residue chain is Ketol-acid reductoisomerase (NADP(+)) (339 aa).

The KARI N-terminal Rossmann domain maps to 1 to 182 (MRVYYDRDAD…GGGRAGVIET (182 aa)). NADP(+) is bound by residues 24–27 (YGSQ), Arg48, Ser51, Thr53, and 83–86 (DELQ). The active site involves His108. Residue Gly134 coordinates NADP(+). The KARI C-terminal knotted domain maps to 183 to 328 (TFKEECETDL…EKLRAMMPWI (146 aa)). Mg(2+) contacts are provided by Asp191, Glu195, Glu227, and Glu231. Ser252 is a substrate binding site.

This sequence belongs to the ketol-acid reductoisomerase family. The cofactor is Mg(2+).

It carries out the reaction (2R)-2,3-dihydroxy-3-methylbutanoate + NADP(+) = (2S)-2-acetolactate + NADPH + H(+). The catalysed reaction is (2R,3R)-2,3-dihydroxy-3-methylpentanoate + NADP(+) = (S)-2-ethyl-2-hydroxy-3-oxobutanoate + NADPH + H(+). It functions in the pathway amino-acid biosynthesis; L-isoleucine biosynthesis; L-isoleucine from 2-oxobutanoate: step 2/4. Its pathway is amino-acid biosynthesis; L-valine biosynthesis; L-valine from pyruvate: step 2/4. Its function is as follows. Involved in the biosynthesis of branched-chain amino acids (BCAA). Catalyzes an alkyl-migration followed by a ketol-acid reduction of (S)-2-acetolactate (S2AL) to yield (R)-2,3-dihydroxy-isovalerate. In the isomerase reaction, S2AL is rearranged via a Mg-dependent methyl migration to produce 3-hydroxy-3-methyl-2-ketobutyrate (HMKB). In the reductase reaction, this 2-ketoacid undergoes a metal-dependent reduction by NADPH to yield (R)-2,3-dihydroxy-isovalerate. In Xanthobacter autotrophicus (strain ATCC BAA-1158 / Py2), this protein is Ketol-acid reductoisomerase (NADP(+)).